We begin with the raw amino-acid sequence, 229 residues long: Growth factor receptor-bound protein 2-A (229 aa).

The 58-residue stretch at 1–58 (MEAIAKYDFKATADDELSFKRGDVLKVLNEECDQNWYKAELNGKDGFIPKNYIEMKAH) folds into the SH3 1 domain. One can recognise an SH2 domain in the interval 60–152 (WFFGKIPRAK…NQQIFLRDIE (93 aa)). An SH3 2 domain is found at 168–227 (QQPTYVQALFDFDPQEDGELGFRRGDFIQVVDNSDPNWWKGTCLSQTGMFPRNYVTPVNR).

This sequence belongs to the GRB2/sem-5/DRK family.

Its subcellular location is the nucleus. The protein resides in the cytoplasm. It localises to the endosome. It is found in the golgi apparatus. Functionally, adapter protein that provides a critical link between cell surface growth factor receptors and the Ras signaling pathway. Promotes meiotic reinitiation during oocyte maturation. This Xenopus laevis (African clawed frog) protein is Growth factor receptor-bound protein 2-A (grb2-a).